A 146-amino-acid chain; its full sequence is Leghemoglobin 1 (146 aa).

Positions 2-146 (GFTEKQEALV…LAAAIKKAMG (145 aa)) constitute a Globin domain. Tyr-29 carries the nitrated tyrosine modification. Position 44 (Ser-44) interacts with heme b. Residue Ser-44 is modified to Phosphoserine. His-61 serves as a coordination point for O2. Positions 64, 93, and 96 each coordinate heme b. Tyr-134 carries the post-translational modification Nitrated tyrosine.

The protein belongs to the plant globin family. In terms of assembly, monomer. Post-translationally, nitrated in effective nodules and particularly in hypoxic conditions; this mechanism may play a protective role in the symbiosis by buffering toxic peroxynitrite NO(2)(-). Nitration level decrease during nodule senescence. Phosphorylation at Ser-44 disrupts the molecular environment of its porphyrin ring oxygen binding pocket, thus leading to a reduced oxygen consumption and to the delivery of oxygen O(2) to symbiosomes. As to expression, root nodules.

The protein resides in the cytoplasm. It localises to the cytosol. It is found in the nucleus. Functionally, leghemoglobin that reversibly binds oxygen O(2) through a pentacoordinated heme iron. In root nodules, facilitates the diffusion of oxygen to the bacteroids while preventing the bacterial nitrogenase from being inactivated by buffering dioxygen, nitric oxide and carbon monoxide, and promoting the formation of reactive oxygen species (ROS, e.g. H(2)O(2)). This role is essential for symbiotic nitrogen fixation (SNF). The sequence is that of Leghemoglobin 1 from Medicago truncatula (Barrel medic).